The chain runs to 611 residues: Dihydroxy-acid dehydratase (611 aa).

Asp81 serves as a coordination point for Mg(2+). Cys122 lines the [2Fe-2S] cluster pocket. 2 residues coordinate Mg(2+): Asp123 and Lys124. Residue Lys124 is modified to N6-carboxylysine. Cys195 is a binding site for [2Fe-2S] cluster. Glu491 contributes to the Mg(2+) binding site. Ser517 acts as the Proton acceptor in catalysis.

Belongs to the IlvD/Edd family. Homodimer. [2Fe-2S] cluster serves as cofactor. The cofactor is Mg(2+).

It catalyses the reaction (2R)-2,3-dihydroxy-3-methylbutanoate = 3-methyl-2-oxobutanoate + H2O. The enzyme catalyses (2R,3R)-2,3-dihydroxy-3-methylpentanoate = (S)-3-methyl-2-oxopentanoate + H2O. Its pathway is amino-acid biosynthesis; L-isoleucine biosynthesis; L-isoleucine from 2-oxobutanoate: step 3/4. It participates in amino-acid biosynthesis; L-valine biosynthesis; L-valine from pyruvate: step 3/4. Functions in the biosynthesis of branched-chain amino acids. Catalyzes the dehydration of (2R,3R)-2,3-dihydroxy-3-methylpentanoate (2,3-dihydroxy-3-methylvalerate) into 2-oxo-3-methylpentanoate (2-oxo-3-methylvalerate) and of (2R)-2,3-dihydroxy-3-methylbutanoate (2,3-dihydroxyisovalerate) into 2-oxo-3-methylbutanoate (2-oxoisovalerate), the penultimate precursor to L-isoleucine and L-valine, respectively. The chain is Dihydroxy-acid dehydratase from Histophilus somni (strain 2336) (Haemophilus somnus).